The chain runs to 156 residues: Small ribosomal subunit protein uS7 (156 aa).

This sequence belongs to the universal ribosomal protein uS7 family. Part of the 30S ribosomal subunit. Contacts proteins S9 and S11.

In terms of biological role, one of the primary rRNA binding proteins, it binds directly to 16S rRNA where it nucleates assembly of the head domain of the 30S subunit. Is located at the subunit interface close to the decoding center, probably blocks exit of the E-site tRNA. This chain is Small ribosomal subunit protein uS7, found in Methylobacterium nodulans (strain LMG 21967 / CNCM I-2342 / ORS 2060).